The following is an 818-amino-acid chain: SIT4-associating protein SAP4 (818 aa).

Disordered regions lie at residues 33-60 (ETSS…RDRS) and 499-526 (TSNT…KNIK). Residues 509–518 (NNDSNDSNDN) are compositionally biased toward low complexity.

It belongs to the SAPS family. Post-translationally, hyperphosphorylated in the absence of SIT4.

Associates with the SIT4 phosphatase in a cell cycle dependent manner. May be directly or indirectly involved in SIT4-dependent functions in budding and in normal G1 cyclin expression. This is SIT4-associating protein SAP4 (SAP4) from Saccharomyces cerevisiae (strain ATCC 204508 / S288c) (Baker's yeast).